Here is a 134-residue protein sequence, read N- to C-terminus: Ribosome-binding factor A (134 aa).

Belongs to the RbfA family. In terms of assembly, monomer. Binds 30S ribosomal subunits, but not 50S ribosomal subunits or 70S ribosomes.

Its subcellular location is the cytoplasm. In terms of biological role, one of several proteins that assist in the late maturation steps of the functional core of the 30S ribosomal subunit. Associates with free 30S ribosomal subunits (but not with 30S subunits that are part of 70S ribosomes or polysomes). Required for efficient processing of 16S rRNA. May interact with the 5'-terminal helix region of 16S rRNA. The sequence is that of Ribosome-binding factor A from Psychrobacter cryohalolentis (strain ATCC BAA-1226 / DSM 17306 / VKM B-2378 / K5).